The primary structure comprises 156 residues: Ribosomal RNA large subunit methyltransferase H (156 aa).

S-adenosyl-L-methionine-binding positions include leucine 72, glycine 104, and 123 to 128 (FGAMVW).

The protein belongs to the RNA methyltransferase RlmH family. Homodimer.

It is found in the cytoplasm. It catalyses the reaction pseudouridine(1915) in 23S rRNA + S-adenosyl-L-methionine = N(3)-methylpseudouridine(1915) in 23S rRNA + S-adenosyl-L-homocysteine + H(+). Functionally, specifically methylates the pseudouridine at position 1915 (m3Psi1915) in 23S rRNA. This chain is Ribosomal RNA large subunit methyltransferase H, found in Dinoroseobacter shibae (strain DSM 16493 / NCIMB 14021 / DFL 12).